The chain runs to 316 residues: Large ribosomal subunit protein uL10 (316 aa).

The disordered stretch occupies residues 282–316; that stretch reads ASAAKADEPKKEEAKKVEEEEEEEEDGFMGFGMFD. A compositionally biased stretch (basic and acidic residues) spans 286-299; the sequence is KADEPKKEEAKKVE.

It belongs to the universal ribosomal protein uL10 family. As to quaternary structure, P0 forms a pentameric complex by interaction with dimers of P1 and P2. In terms of processing, phosphorylated.

Functionally, ribosomal protein P0 is the functional equivalent of E.coli protein L10. The polypeptide is Large ribosomal subunit protein uL10 (RPLP0) (Plasmodium falciparum (isolate 7G8)).